The chain runs to 213 residues: uncharacterized protein (213 aa).

The first 19 residues, 1–19 (MKKVLLLLFVLTIGLALSA), serve as a signal peptide directing secretion. Cysteine 20 carries N-palmitoyl cysteine lipidation. Cysteine 20 is lipidated: S-diacylglycerol cysteine. The tract at residues 20–62 (CSQSSDASEKEKPKEKKSQEELEKELDKELKKGGEPKTKKDDQ) is disordered. Basic and acidic residues predominate over residues 26–62 (ASEKEKPKEKKSQEELEKELDKELKKGGEPKTKKDDQ).

Its subcellular location is the cell membrane. This is an uncharacterized protein from Bacillus subtilis (strain 168).